Reading from the N-terminus, the 203-residue chain is Cryptic neisserial protein 1 (203 aa).

The signal sequence occupies residues Met1 to Ala18.

Belongs to the Cnp family.

It is found in the periplasm. Its subcellular location is the cytoplasm. This Neisseria gonorrhoeae (strain ATCC 700825 / FA 1090) protein is Cryptic neisserial protein 1.